The chain runs to 297 residues: Bifunctional protein FolD 1 (297 aa).

NADP(+) contacts are provided by residues 164 to 166, S193, and I234; that span reads GRS.

This sequence belongs to the tetrahydrofolate dehydrogenase/cyclohydrolase family. Homodimer.

It catalyses the reaction (6R)-5,10-methylene-5,6,7,8-tetrahydrofolate + NADP(+) = (6R)-5,10-methenyltetrahydrofolate + NADPH. It carries out the reaction (6R)-5,10-methenyltetrahydrofolate + H2O = (6R)-10-formyltetrahydrofolate + H(+). Its pathway is one-carbon metabolism; tetrahydrofolate interconversion. Its function is as follows. Catalyzes the oxidation of 5,10-methylenetetrahydrofolate to 5,10-methenyltetrahydrofolate and then the hydrolysis of 5,10-methenyltetrahydrofolate to 10-formyltetrahydrofolate. The protein is Bifunctional protein FolD 1 of Haloarcula marismortui (strain ATCC 43049 / DSM 3752 / JCM 8966 / VKM B-1809) (Halobacterium marismortui).